The primary structure comprises 260 residues: Thrombin-like enzyme acutobin (260 aa).

Residues 1 to 18 (MVLIRVLANLLILQLSYA) form the signal peptide. A propeptide spanning residues 19–24 (QKSSEL) is cleaved from the precursor. In terms of domain architecture, Peptidase S1 spans 25–251 (VIGGVECDIN…YNDWIRSITA (227 aa)). Intrachain disulfides connect cysteine 31–cysteine 165, cysteine 52–cysteine 68, cysteine 102–cysteine 258, cysteine 144–cysteine 212, cysteine 176–cysteine 191, and cysteine 202–cysteine 227. Residue histidine 67 is the Charge relay system of the active site. N-linked (GlcNAc...) asparagine glycans are attached at residues asparagine 101 and asparagine 105. The active-site Charge relay system is the aspartate 112. N-linked (GlcNAc...) asparagine glycosylation occurs at asparagine 124. The active-site Charge relay system is serine 206. An N-linked (GlcNAc...) asparagine glycan is attached at asparagine 253.

Belongs to the peptidase S1 family. Snake venom subfamily. Monomer. In terms of processing, N-glycosylated. As to expression, expressed by the venom gland.

The protein localises to the secreted. In terms of biological role, thrombin-like snake venom serine protease that coagulates human fibrinogen by hydrolysis of the alpha chains (FGA). The sequence is that of Thrombin-like enzyme acutobin from Deinagkistrodon acutus (Hundred-pace snake).